We begin with the raw amino-acid sequence, 933 residues long: Myocardin (933 aa).

The MEF2C-binding signature appears at 12–27 (IRSKFRSVLQLRLQQR). 3 RPEL repeats span residues 18 to 43 (SVLQLRLQQRRTQEQLANEGIIPPLR), 62 to 87 (DTLKHKVRNRSDRGNVVKMHILQASS), and 106 to 131 (DDLNEKIALRPGPLELVEKNILPVDC). Positions 153–205 (FEEDSSSDGLSPDQTRSEDLPGSAGSPLDTKAAETPLAGPRGTVQDLTLGSEN) are HDAC5-binding. Disordered stretches follow at residues 154–282 (EEDS…PPPM) and 324–365 (NEQM…GPLP). A compositionally biased stretch (polar residues) spans 210–220 (SAPQSGNQSDL). Over residues 248 to 265 (NRHKKPKDPKPKVKKLKY) the composition is skewed to basic residues. Residues 330–346 (NPNSSSAPLSSTPLSPA) are compositionally biased toward low complexity. Positions 347 to 357 (KNSFSGQTGVS) are enriched in polar residues. An SAP domain is found at 368–402 (LDDLKVSELRQQLRIRGLPVSGTKTALMDRLRPFQ). Residues serine 445, serine 449, serine 453, and serine 457 each carry the phosphoserine; by GSK3-beta modification. Residues 515–550 (LVEKQKVINELTWKLQQEQRQVEELRMQLQKQKRGT) are a coiled coil. A disordered region spans residues 568–613 (DAGSSCPFAPLPRAVKRQSNSSEEQPAAGDAARLRPLGNTHCAESS). 4 positions are modified to phosphoserine; by GSK3-beta: serine 621, serine 625, serine 629, and serine 633. Disordered stretches follow at residues 630–672 (PQHS…VSSP) and 760–794 (PKIPGSSRSPTAALPKPSATFDQASSGGQLAFDHY). The segment at 712 to 933 (ITQPPSYEDA…SPMDLHLQQW (222 aa)) is required for interaction with and ubiquitination by STUB1. Phosphoserine; by MAPK1 and MAPK3 is present on residues serine 810, serine 857, and serine 864. Position 891 is a phosphothreonine; by MAPK1 and MAPK3 (threonine 891).

As to quaternary structure, homodimer. Interacts with MLLT7/FOXO4. Interacts with SRF, its association does not depend on specific DNA sequences for ternary complex formation. Interacts (via C-terminal) with EP300 (via the CREB-binding domain). Interacts with HDAC4 and HDAC5. Interacts with MEF2C. Interacts (via C-terminus) with STUB1/CHIP. Interacts with PURB. In terms of processing, ubiquitinated; by STUB1/CHIP at the C-terminus, leading to its degradation by the proteasome. Phosphorylation by GSK3B is required for STUB1/CHIP-mediated ubiquitination. Post-translationally, phosphorylation negatively regulates the intrinsic myocardin transcriptional activity. Phosphorylated; by GSK3B. In terms of tissue distribution, expressed in the heart and in smooth muscle cells-containing tissues (aorta, pulmonary vein, lung), but is not detectable in skeletal muscle, liver, kidney and spleen.

The protein localises to the nucleus. Smooth muscle cells (SM) and cardiac muscle cells-specific transcriptional factor which uses the canonical single or multiple CArG boxes DNA sequence. Acts as a cofactor of serum response factor (SRF) with the potential to modulate SRF-target genes. Plays a crucial role in cardiogenesis, urinary bladder development, and differentiation of the smooth muscle cell lineage (myogenesis). Positively regulates the transcription of genes involved in vascular smooth muscle contraction. This Sus scrofa (Pig) protein is Myocardin (MYOCD).